The primary structure comprises 372 residues: MPLPDFHVSEPFTLGIELEMLVVNPPGYDLSQDSSILIDAVKNKITAGEVKHDITESMLELATDVCRDINQAAGQFSAMQKVVLQAAADHHLEICGGGTHPFQKWQRQEVCDNERYQRTLENFGYLIQQVTVFGQHVHVGCASGDDAIYLLHGLSRFVPHFIALSAASPYMQGTDTRFASSRPNIFSAFPDNGPMPWVSNWQQFEALFRCLSYTTMIDSIKDLHWDIRPSPHFGTVEVRVMDTPLTLSHAVNMAGLIQATAHWLLTERPFKHQEKDYLLYKFNRFQACRYGLEGVITDPHTGDRRPLTEDTLRLLEKIAPSAHKIGASSAIEALHRQVVSGLNEAQLMRDFVADGGSLIGLVKKHCEIWAGD.

The protein belongs to the glutamate--cysteine ligase type 2 family. YbdK subfamily. As to quaternary structure, homodimer.

It catalyses the reaction L-cysteine + L-glutamate + ATP = gamma-L-glutamyl-L-cysteine + ADP + phosphate + H(+). Functionally, ATP-dependent carboxylate-amine ligase which exhibits weak glutamate--cysteine ligase activity. The polypeptide is Putative glutamate--cysteine ligase 2 (ybdK) (Shigella boydii serotype 4 (strain Sb227)).